The chain runs to 339 residues: Phenylalanine--tRNA ligase alpha subunit (339 aa).

A Mg(2+)-binding site is contributed by Glu-254.

Belongs to the class-II aminoacyl-tRNA synthetase family. Phe-tRNA synthetase alpha subunit type 1 subfamily. As to quaternary structure, tetramer of two alpha and two beta subunits. Mg(2+) is required as a cofactor.

Its subcellular location is the cytoplasm. It carries out the reaction tRNA(Phe) + L-phenylalanine + ATP = L-phenylalanyl-tRNA(Phe) + AMP + diphosphate + H(+). In Chlamydia pneumoniae (Chlamydophila pneumoniae), this protein is Phenylalanine--tRNA ligase alpha subunit (pheS).